Reading from the N-terminus, the 522-residue chain is Glutamate--cysteine ligase (522 aa).

It belongs to the glutamate--cysteine ligase type 1 family. Type 1 subfamily.

It catalyses the reaction L-cysteine + L-glutamate + ATP = gamma-L-glutamyl-L-cysteine + ADP + phosphate + H(+). It functions in the pathway sulfur metabolism; glutathione biosynthesis; glutathione from L-cysteine and L-glutamate: step 1/2. This is Glutamate--cysteine ligase from Shewanella halifaxensis (strain HAW-EB4).